Here is a 375-residue protein sequence, read N- to C-terminus: Holliday junction branch migration complex subunit RuvB (375 aa).

Positions 1–22 are enriched in polar residues; that stretch reads MAIVSSKQSPQPDGSKKPSQAK. A disordered region spans residues 1–44; it reads MAIVSSKQSPQPDGSKKPSQAKSVKKSVEHSKPQQTDALLQPEA. Residues 13–218 are large ATPase domain (RuvB-L); sequence DGSKKPSQAK…FGFVQRLRFY (206 aa). ATP contacts are provided by residues L57, R58, G99, K102, T103, T104, 165-167, R208, Y218, and R255; that span reads EDF. Position 103 (T103) interacts with Mg(2+). The interval 219 to 289 is small ATPAse domain (RuvB-S); that stretch reads EADELGQIVL…IAQEALELFN (71 aa). The interval 292 to 375 is head domain (RuvB-H); the sequence is PCGLDWTDRR…PPDEQMRLLS (84 aa). R347 and R352 together coordinate DNA.

This sequence belongs to the RuvB family. As to quaternary structure, homohexamer. Forms an RuvA(8)-RuvB(12)-Holliday junction (HJ) complex. HJ DNA is sandwiched between 2 RuvA tetramers; dsDNA enters through RuvA and exits via RuvB. An RuvB hexamer assembles on each DNA strand where it exits the tetramer. Each RuvB hexamer is contacted by two RuvA subunits (via domain III) on 2 adjacent RuvB subunits; this complex drives branch migration. In the full resolvosome a probable DNA-RuvA(4)-RuvB(12)-RuvC(2) complex forms which resolves the HJ.

It localises to the cytoplasm. The enzyme catalyses ATP + H2O = ADP + phosphate + H(+). Its function is as follows. The RuvA-RuvB-RuvC complex processes Holliday junction (HJ) DNA during genetic recombination and DNA repair, while the RuvA-RuvB complex plays an important role in the rescue of blocked DNA replication forks via replication fork reversal (RFR). RuvA specifically binds to HJ cruciform DNA, conferring on it an open structure. The RuvB hexamer acts as an ATP-dependent pump, pulling dsDNA into and through the RuvAB complex. RuvB forms 2 homohexamers on either side of HJ DNA bound by 1 or 2 RuvA tetramers; 4 subunits per hexamer contact DNA at a time. Coordinated motions by a converter formed by DNA-disengaged RuvB subunits stimulates ATP hydrolysis and nucleotide exchange. Immobilization of the converter enables RuvB to convert the ATP-contained energy into a lever motion, pulling 2 nucleotides of DNA out of the RuvA tetramer per ATP hydrolyzed, thus driving DNA branch migration. The RuvB motors rotate together with the DNA substrate, which together with the progressing nucleotide cycle form the mechanistic basis for DNA recombination by continuous HJ branch migration. Branch migration allows RuvC to scan DNA until it finds its consensus sequence, where it cleaves and resolves cruciform DNA. The polypeptide is Holliday junction branch migration complex subunit RuvB (Acaryochloris marina (strain MBIC 11017)).